Here is a 542-residue protein sequence, read N- to C-terminus: uncharacterized protein (542 aa).

Transmembrane regions (helical) follow at residues 4–23, 28–47, 57–79, 86–108, and 151–173; these read ILRD…GYPL, IGGI…AFGA, IVYQ…HGFL, GVIY…LIPH, and PVVG…IYLA. 2 RCK C-terminal domains span residues 186–270 and 273–356; these read RTLK…VIGC and EVQA…LGDS. 6 helical membrane-spanning segments follow: residues 365–384, 389–408, 415–437, 457–479, 484–506, and 519–541; these read IAVL…VPIP, ITVR…FLGA, LVWV…IFLA, WAIL…YVGY, IPMG…LGFA, and YAMV…IAVL.

It belongs to the AAE transporter (TC 2.A.81) family.

It localises to the cell membrane. This is an uncharacterized protein from Symbiobacterium thermophilum (strain DSM 24528 / JCM 14929 / IAM 14863 / T).